The following is a 104-amino-acid chain: Urease subunit beta (104 aa).

The protein belongs to the urease beta subunit family. As to quaternary structure, heterotrimer of UreA (gamma), UreB (beta) and UreC (alpha) subunits. Three heterotrimers associate to form the active enzyme.

The protein resides in the cytoplasm. It catalyses the reaction urea + 2 H2O + H(+) = hydrogencarbonate + 2 NH4(+). It functions in the pathway nitrogen metabolism; urea degradation; CO(2) and NH(3) from urea (urease route): step 1/1. The chain is Urease subunit beta from Rhodococcus jostii (strain RHA1).